The chain runs to 86 residues: Toxin CngtIV (86 aa).

An N-terminal signal peptide occupies residues 1-19 (MNSLLIITACLVLIGTVWA). The region spanning 20 to 84 (KDGYLVDVKG…TWPLPNKRCG (65 aa)) is the LCN-type CS-alpha/beta domain. Disulfide bonds link cysteine 30–cysteine 83, cysteine 34–cysteine 59, cysteine 43–cysteine 64, and cysteine 47–cysteine 66.

The protein belongs to the long (4 C-C) scorpion toxin superfamily. Sodium channel inhibitor family. Beta subfamily. Expressed by the venom gland.

It is found in the secreted. Its function is as follows. Beta toxins bind voltage-independently at site-4 of sodium channels (Nav) and shift the voltage of activation toward more negative potentials thereby affecting sodium channel activation and promoting spontaneous and repetitive firing. The polypeptide is Toxin CngtIV (Centruroides noxius (Mexican scorpion)).